The chain runs to 228 residues: Superoxide dismutase [Mn], mitochondrial (228 aa).

Residues 1–24 (MALRNLMTKKPFAGILTFRQQLRC) constitute a mitochondrion transit peptide. 4 residues coordinate Mn(2+): His52, His100, Asp189, and His193.

It belongs to the iron/manganese superoxide dismutase family. As to quaternary structure, homotetramer. Requires Mn(2+) as cofactor.

Its subcellular location is the mitochondrion matrix. It carries out the reaction 2 superoxide + 2 H(+) = H2O2 + O2. In terms of biological role, destroys superoxide anion radicals which are normally produced within the cells and which are toxic to biological systems. The chain is Superoxide dismutase [Mn], mitochondrial (SODA) from Capsicum annuum (Capsicum pepper).